Here is a 535-residue protein sequence, read N- to C-terminus: Cytochrome P450 monooxygenase claP (535 aa).

Transmembrane regions (helical) follow at residues 7-27 (IGTLDVLIFLVFLWLLSKLVG) and 225-245 (YFSMVIFLLAQVFPILLKLPT). Residue cysteine 472 coordinates heme.

This sequence belongs to the cytochrome P450 family. Requires heme as cofactor.

The protein resides in the membrane. Its pathway is secondary metabolite biosynthesis; terpenoid biosynthesis. Functionally, cytochrome P450 monooxygenase; part of the gene cluster that mediates the biosynthesis of clavilactone A, a meroterpenoid that features a unique benzo-fused ten-membered carbocyclic ring unit with an alpha,beta-epoxy-gamma-lactone moiety, forming an intriguing 10/5/3 tricyclic nested skeleton. Cytochrome P450 monooxygenases claO, claP, claQ, claU, and claW are close orthologs, suggesting that a redundant function or pseudogenes are present in the cla cluster. These monoxygenases are not involved in clavilactone A biosynthesis nor its modification. ClaR, ClaS and ClaT are sufficient to produce clavilactone A. The biosynthesis begins with the prenyltransferase claS that transfers geranyl pyrophosphate (GPP) to hydroquinone to produces geranylhydroquinone. The cytochrome P450 monooxygenase claR then catalyzes the diradical coupling reaction between the intramolecular hydroquinone and allyl moieties to form the benzo-fused ten-membered carbocyclic ring unit of wigantol. Finally the cytochrome P450 monooxygenase claT exquisitely and stereoselectively assembles the alpha,beta-epoxy-gamma-lactone moiety, producing clavilactone A via arnebinol A. This is Cytochrome P450 monooxygenase claP from Ampulloclitocybe clavipes (Club foot).